The following is a 311-amino-acid chain: Protoheme IX farnesyltransferase (311 aa).

Helical transmembrane passes span 32-52 (VMSL…VPIN), 53-73 (PWYG…AGAL), 104-124 (FIFG…FINW), 125-145 (FAAF…TIWL), 153-173 (IVIG…VTTG), 180-200 (FLLF…LSLF), 224-244 (KQIL…CFTG), 245-265 (LGGV…IYFA), and 285-305 (FFFS…ESLV).

Belongs to the UbiA prenyltransferase family. Protoheme IX farnesyltransferase subfamily.

The protein localises to the cell inner membrane. The catalysed reaction is heme b + (2E,6E)-farnesyl diphosphate + H2O = Fe(II)-heme o + diphosphate. It functions in the pathway porphyrin-containing compound metabolism; heme O biosynthesis; heme O from protoheme: step 1/1. Its function is as follows. Converts heme B (protoheme IX) to heme O by substitution of the vinyl group on carbon 2 of heme B porphyrin ring with a hydroxyethyl farnesyl side group. This is Protoheme IX farnesyltransferase from Bartonella tribocorum (strain CIP 105476 / IBS 506).